The primary structure comprises 220 residues: Serine protease-like protein 51 (220 aa).

The signal sequence occupies residues 1-16; that stretch reads MFQLLIPLLLALKGHA. One can recognise a Peptidase S1 domain in the interval 23-220; sequence VQCGHRPAFP…SSKWVSSVGA (198 aa). An N-linked (GlcNAc...) asparagine glycan is attached at asparagine 33. Cysteine 64 and cysteine 80 are oxidised to a cystine. Residue asparagine 92 is glycosylated (N-linked (GlcNAc...) asparagine). Cysteine 157 and cysteine 170 are joined by a disulfide.

It belongs to the peptidase S1 family.

The protein resides in the secreted. This is Serine protease-like protein 51 from Homo sapiens (Human).